The sequence spans 179 residues: ATP-dependent protease subunit HslV (179 aa).

The active site involves threonine 7. Residues glycine 162, cysteine 165, and threonine 168 each contribute to the Na(+) site.

Belongs to the peptidase T1B family. HslV subfamily. As to quaternary structure, a double ring-shaped homohexamer of HslV is capped on each side by a ring-shaped HslU homohexamer. The assembly of the HslU/HslV complex is dependent on binding of ATP.

The protein resides in the cytoplasm. The enzyme catalyses ATP-dependent cleavage of peptide bonds with broad specificity.. Allosterically activated by HslU binding. Its function is as follows. Protease subunit of a proteasome-like degradation complex believed to be a general protein degrading machinery. The protein is ATP-dependent protease subunit HslV of Bordetella petrii (strain ATCC BAA-461 / DSM 12804 / CCUG 43448).